The sequence spans 231 residues: Uracil-DNA glycosylase (231 aa).

D74 acts as the Proton acceptor in catalysis.

This sequence belongs to the uracil-DNA glycosylase (UDG) superfamily. UNG family.

Its subcellular location is the cytoplasm. The catalysed reaction is Hydrolyzes single-stranded DNA or mismatched double-stranded DNA and polynucleotides, releasing free uracil.. Excises uracil residues from the DNA which can arise as a result of misincorporation of dUMP residues by DNA polymerase or due to deamination of cytosine. This is Uracil-DNA glycosylase from Campylobacter jejuni subsp. doylei (strain ATCC BAA-1458 / RM4099 / 269.97).